Consider the following 257-residue polypeptide: Probable enoyl-CoA hydratase echA8 (257 aa).

Belongs to the enoyl-CoA hydratase/isomerase family.

The catalysed reaction is a (3S)-3-hydroxyacyl-CoA = a (2E)-enoyl-CoA + H2O. It carries out the reaction a 4-saturated-(3S)-3-hydroxyacyl-CoA = a (3E)-enoyl-CoA + H2O. Could possibly oxidize fatty acids using specific components. The polypeptide is Probable enoyl-CoA hydratase echA8 (echA8) (Mycobacterium tuberculosis (strain CDC 1551 / Oshkosh)).